The sequence spans 279 residues: Undecaprenyl-diphosphatase (279 aa).

8 helical membrane-spanning segments follow: residues T17–F37, A46–L66, F92–L112, S123–V143, I156–V176, A197–Y217, E226–I246, and S257–V277.

This sequence belongs to the UppP family.

Its subcellular location is the cell inner membrane. The enzyme catalyses di-trans,octa-cis-undecaprenyl diphosphate + H2O = di-trans,octa-cis-undecaprenyl phosphate + phosphate + H(+). Catalyzes the dephosphorylation of undecaprenyl diphosphate (UPP). Confers resistance to bacitracin. This chain is Undecaprenyl-diphosphatase, found in Leptospira biflexa serovar Patoc (strain Patoc 1 / ATCC 23582 / Paris).